The chain runs to 338 residues: uncharacterized protein (338 aa).

Positions 1–29 (MIKQLYKNITICTLALSTTFTVLPATSYA) are cleaved as a signal peptide.

This sequence belongs to the aerolysin family.

This is an uncharacterized protein from Staphylococcus aureus (strain MSSA476).